The sequence spans 361 residues: UPF0283 membrane protein Smed_1530 (361 aa).

The disordered stretch occupies residues 1 to 40 (MNDDSNGRRRRPAAFPVGTEDATSRELEQTPRRAPGSFSD). Residues 22-31 (ATSRELEQTP) are compositionally biased toward basic and acidic residues. A run of 2 helical transmembrane segments spans residues 76-96 (FGKI…GLWV) and 109-129 (WLGY…LIVV).

The protein belongs to the UPF0283 family.

The protein resides in the cell inner membrane. This Sinorhizobium medicae (strain WSM419) (Ensifer medicae) protein is UPF0283 membrane protein Smed_1530.